The following is a 204-amino-acid chain: MSQLTISKIIEEPFSALSLSEMLKILAALGWSTNYLAMVYRTQADKLPAIAVLPLCCDIAWEFTYAWIYPQASGHWQGVVRVWFFLHTAVLAATLRYAPNDWAGTPLGESRGRLVLLYAAVIAAFAAGQLCLALEMGGALGFHWGGALCQFLSSSAAVGQLLTRGHTRGASLLIWGARAISTAGGDRALIGCVVSGAVPIDQKA.

Helical transmembrane passes span 19 to 39 (LSEM…LAMV), 49 to 69 (AIAV…AWIY), 75 to 95 (HWQG…AATL), 114 to 134 (LVLL…CLAL), and 138 to 158 (GALG…SAAV).

It belongs to the paxB family.

The protein resides in the membrane. The protein operates within secondary metabolite biosynthesis; terpenoid biosynthesis. Its function is as follows. Terpene cyclase; part of the gene cluster B that mediates the biosynthesis of austinol and dehydroaustinol, two fungal meroterpenoids. The first step of the pathway is the synthesis of 3,5-dimethylorsellinic acid by the polyketide synthase ausA. 3,5-dimethylorsellinic acid is then prenylated by the polyprenyl transferase ausN. Further epoxidation by the FAD-dependent monooxygenase ausM and cyclization by the probable terpene cyclase ausL lead to the formation of protoaustinoid A. Protoaustinoid A is then oxidized to spiro-lactone preaustinoid A3 by the combined action of the FAD-binding monooxygenases ausB and ausC, and the dioxygenase ausE. Acid-catalyzed keto-rearrangement and ring contraction of the tetraketide portion of preaustinoid A3 by ausJ lead to the formation of preaustinoid A4. The aldo-keto reductase ausK, with the help of ausH, is involved in the next step by transforming preaustinoid A4 into isoaustinone which is in turn hydroxylated by the P450 monooxygenase ausI to form austinolide. Finally, the cytochrome P450 monooxygenase ausG modifies austinolide to austinol. Austinol can be further modified to dehydroaustinol which forms a diffusible complex with diorcinol that initiates conidiation. Due to genetic rearrangements of the clusters and the subsequent loss of some enzymes, the end products of the Emericella nidulans austinoid biosynthesis clusters are austinol and dehydroaustinol, even if additional enzymes, such as the O-acetyltransferase ausQ and the cytochrome P450 monooxygenase ausR are still functional. The polypeptide is Terpene cyclase ausL (Emericella nidulans (strain FGSC A4 / ATCC 38163 / CBS 112.46 / NRRL 194 / M139) (Aspergillus nidulans)).